The sequence spans 164 residues: Crossover junction endodeoxyribonuclease RuvC (164 aa).

Residues Asp-7, Glu-67, and Asp-139 contribute to the active site. 3 residues coordinate Mg(2+): Asp-7, Glu-67, and Asp-139.

The protein belongs to the RuvC family. As to quaternary structure, homodimer which binds Holliday junction (HJ) DNA. The HJ becomes 2-fold symmetrical on binding to RuvC with unstacked arms; it has a different conformation from HJ DNA in complex with RuvA. In the full resolvosome a probable DNA-RuvA(4)-RuvB(12)-RuvC(2) complex forms which resolves the HJ. Requires Mg(2+) as cofactor.

It localises to the cytoplasm. The enzyme catalyses Endonucleolytic cleavage at a junction such as a reciprocal single-stranded crossover between two homologous DNA duplexes (Holliday junction).. Its function is as follows. The RuvA-RuvB-RuvC complex processes Holliday junction (HJ) DNA during genetic recombination and DNA repair. Endonuclease that resolves HJ intermediates. Cleaves cruciform DNA by making single-stranded nicks across the HJ at symmetrical positions within the homologous arms, yielding a 5'-phosphate and a 3'-hydroxyl group; requires a central core of homology in the junction. The consensus cleavage sequence is 5'-(A/T)TT(C/G)-3'. Cleavage occurs on the 3'-side of the TT dinucleotide at the point of strand exchange. HJ branch migration catalyzed by RuvA-RuvB allows RuvC to scan DNA until it finds its consensus sequence, where it cleaves and resolves the cruciform DNA. This is Crossover junction endodeoxyribonuclease RuvC from Citrifermentans bemidjiense (strain ATCC BAA-1014 / DSM 16622 / JCM 12645 / Bem) (Geobacter bemidjiensis).